We begin with the raw amino-acid sequence, 122 residues long: MAFDKLANVATVDAIFAISSSTFLWSTWVLQRTILKRPNFFSPNPVVEKMVHPTLITWKLFSFTSVLTVSTFTFASCLIMRTIGVENIKEFGLYAREKLSFARAKPVKDDITSFPNHKISIT.

2 consecutive transmembrane segments (helical) span residues 9-29 (VATV…STWV) and 60-80 (LFSF…CLIM).

It localises to the cytoplasm. The protein resides in the membrane. This is an uncharacterized protein from Schizosaccharomyces pombe (strain 972 / ATCC 24843) (Fission yeast).